Here is a 191-residue protein sequence, read N- to C-terminus: Protein Ves (191 aa).

Belongs to the Ves family.

This Escherichia fergusonii (strain ATCC 35469 / DSM 13698 / CCUG 18766 / IAM 14443 / JCM 21226 / LMG 7866 / NBRC 102419 / NCTC 12128 / CDC 0568-73) protein is Protein Ves.